A 224-amino-acid polypeptide reads, in one-letter code: MAFVKSGWLLRQSTILRRWKKNWFDLWSDGRLIFYDDQNRHDIEDKIHMRIHCINLRVGNECRDFQPPEGKQRDCLLQIVCRDGKTVNLCAESADDCLAWKIALQDARTNTGYVGSDVMYDETAISSAPPPYTAYATPSPEVYGYGYGQYHGAYPTVGPQVFYASNGQAYDVPYQYPYHGPYGQPPANHVIIRERYRDNDGDLALGMLAGAATGMALGSLFWVF.

The 108-residue stretch at 2–109 folds into the PH domain; that stretch reads AFVKSGWLLR…WKIALQDART (108 aa). Lysine 20 provides a ligand contact to a 1,2-diacyl-sn-glycero-3-phospho-L-serine.

The protein localises to the recycling endosome membrane. Its function is as follows. Involved in retrograde transport of recycling endosomes. The sequence is that of Pleckstrin homology domain-containing family B member 2 (PLEKHB2) from Gallus gallus (Chicken).